The primary structure comprises 438 residues: uncharacterized protein (438 aa).

The first 19 residues, 1–19 (MKKLLLAASIICLASAGLA), serve as a signal peptide directing secretion.

This is an uncharacterized protein from Rickettsia conorii (strain ATCC VR-613 / Malish 7).